The primary structure comprises 371 residues: Ligninase LG2 (371 aa).

A signal peptide spans 1–21 (MAFKQLFAAITVALSLTAANA). Positions 22 to 28 (AVVKEKR) are excised as a propeptide. 4 disulfide bridges follow: Cys-31–Cys-43, Cys-42–Cys-313, Cys-62–Cys-148, and Cys-277–Cys-345. Residue His-75 is the Proton acceptor of the active site. Residues Asp-76, Gly-94, Asp-96, and Ser-98 each contribute to the Ca(2+) site. Position 199 is a 3-hydroxytryptophan (Trp-199). Position 204 (His-204) interacts with heme b. Positions 205, 222, 224, 227, and 229 each coordinate Ca(2+). N-linked (GlcNAc...) asparagine glycosylation is present at Asn-285.

Belongs to the peroxidase family. Ligninase subfamily. Requires Ca(2+) as cofactor. The cofactor is heme b.

It carries out the reaction 1-(3,4-dimethoxyphenyl)-2-(2-methoxyphenoxy)propane-1,3-diol + H2O2 = 3,4-dimethoxybenzaldehyde + guaiacol + glycolaldehyde + H2O. It catalyses the reaction 2 (3,4-dimethoxyphenyl)methanol + H2O2 = 2 (3,4-dimethoxyphenyl)methanol radical + 2 H2O. Its pathway is secondary metabolite metabolism; lignin degradation. Functionally, depolymerization of lignin. Catalyzes the C(alpha)-C(beta) cleavage of the propyl side chains of lignin. In Phanerodontia chrysosporium (White-rot fungus), this protein is Ligninase LG2 (GLG2).